We begin with the raw amino-acid sequence, 89 residues long: U-scoloptoxin(12)-Er1a (89 aa).

The signal sequence occupies residues 1-22 (MKGLFLVVFLMWFVSQMNTEET).

The protein belongs to the scoloptoxin-12 family. In terms of processing, contains 3 disulfide bonds. Expressed by the venom gland.

It is found in the secreted. The sequence is that of U-scoloptoxin(12)-Er1a from Ethmostigmus rubripes (Giant centipede).